The chain runs to 642 residues: Triacylglycerol lipase 3 (642 aa).

Positions 204-392 (LILQGGSLFG…NEIEPFLNIN (189 aa)) constitute a PNPLA domain. The GXSXG motif lies at 235 to 239 (GSSMG). Residue serine 237 is the Nucleophile of the active site. The HXXXXD acyltransferase motif motif lies at 298-303 (HGYSQD). The active-site Proton acceptor is glutamate 403. Polar residues predominate over residues 471–481 (RKTQRSSSQSP). The segment at 471 to 502 (RKTQRSSSQSPIKAGTVEDLEPEPLMSPVPPS) is disordered.

It is found in the lipid droplet. It catalyses the reaction a triacylglycerol + H2O = a diacylglycerol + a fatty acid + H(+). The catalysed reaction is 1,2,3-tri-(9Z-octadecenoyl)-glycerol + H2O = di-(9Z)-octadecenoylglycerol + (9Z)-octadecenoate + H(+). The enzyme catalyses di-(9Z)-octadecenoylglycerol + H2O = (9Z-octadecenoyl)-glycerol + (9Z)-octadecenoate + H(+). It carries out the reaction a 1-acyl-sn-glycero-3-phosphoethanolamine + (9Z)-octadecenoyl-CoA = 1-acyl-2-(9Z)-octadecenoyl-sn-glycero-3-phosphoethanolamine + CoA. It catalyses the reaction a 1-acyl-sn-glycero-3-phosphoethanolamine + hexadecanoyl-CoA = 1-acyl-2-hexadecanoyl-sn-glycero-3-phosphoethanolamine + CoA. Its activity is regulated as follows. Loses its lipolytic activity in cells lacking nonpolar lipids. In terms of biological role, lipid particle-localized triacylglycerol (TAG) lipase. The lipid droplet/particle is a lipid storage compartment which serves as a depot of energy and building blocks for membrane lipid biosynthesis. Involved in the mobilization of the non-polar storage lipids triacylglycerols (TAGs) from lipid particles by hydrolysis of TAGs, releasing and supplying specific fatty acids to the appropriate metabolic pathways. Also catalyzes the acylation of lysophosphatidic acid (LPA). Important for efficient sporulation, but rather through its acyltransferase than lipase activity. This is Triacylglycerol lipase 3 (TGL3) from Saccharomyces cerevisiae (strain ATCC 204508 / S288c) (Baker's yeast).